The sequence spans 311 residues: Oxygen-dependent coproporphyrinogen-III oxidase (311 aa).

Residue serine 93 participates in substrate binding. 2 residues coordinate a divalent metal cation: histidine 97 and histidine 107. Histidine 107 serves as the catalytic Proton donor. Residue 109–111 (NVR) participates in substrate binding. 2 residues coordinate a divalent metal cation: histidine 153 and histidine 184. The important for dimerization stretch occupies residues 252 to 287 (YVEFNLVFDRGTLFGLQSGGRTESILMSLPPVVKWR). 270–272 (GGR) provides a ligand contact to substrate.

It belongs to the aerobic coproporphyrinogen-III oxidase family. In terms of assembly, homodimer. Requires a divalent metal cation as cofactor.

It is found in the cytoplasm. The catalysed reaction is coproporphyrinogen III + O2 + 2 H(+) = protoporphyrinogen IX + 2 CO2 + 2 H2O. Its pathway is porphyrin-containing compound metabolism; protoporphyrin-IX biosynthesis; protoporphyrinogen-IX from coproporphyrinogen-III (O2 route): step 1/1. Involved in the heme biosynthesis. Catalyzes the aerobic oxidative decarboxylation of propionate groups of rings A and B of coproporphyrinogen-III to yield the vinyl groups in protoporphyrinogen-IX. The protein is Oxygen-dependent coproporphyrinogen-III oxidase of Aromatoleum aromaticum (strain DSM 19018 / LMG 30748 / EbN1) (Azoarcus sp. (strain EbN1)).